A 115-amino-acid polypeptide reads, in one-letter code: Large ribosomal subunit protein bL19 (115 aa).

Belongs to the bacterial ribosomal protein bL19 family.

Its function is as follows. This protein is located at the 30S-50S ribosomal subunit interface and may play a role in the structure and function of the aminoacyl-tRNA binding site. This chain is Large ribosomal subunit protein bL19, found in Francisella tularensis subsp. tularensis (strain FSC 198).